A 267-amino-acid chain; its full sequence is Cell division protein FtsQ (267 aa).

Residues 1–32 lie on the Cytoplasmic side of the membrane; that stretch reads MRKKTSSNKKKQTKKTNNISLRRKLGLMYKKA. A helical transmembrane segment spans residues 33–53; it reads ILGLKIALIIFVCLFVFTKYF. Topologically, residues 54-267 are periplasmic; the sequence is AGIKTYLTTN…DKNKYYIEKY (214 aa). One can recognise a POTRA domain in the interval 73–141; the sequence is FKLENVIIEG…NTVYIKLFER (69 aa).

It belongs to the FtsQ/DivIB family. FtsQ subfamily.

The protein resides in the cell inner membrane. Functionally, essential cell division protein. This Rickettsia conorii (strain ATCC VR-613 / Malish 7) protein is Cell division protein FtsQ.